A 624-amino-acid chain; its full sequence is Bifunctional 3'-phosphoadenosine 5'-phosphosulfate synthase 1 (624 aa).

At Met-1 the chain carries N-acetylmethionine. Residues 1 to 225 are adenylyl-sulfate kinase; sequence MELPGSLCKK…VVELLQERDI (225 aa). At Lys-12 the chain carries N6-acetyllysine. 62 to 67 is a binding site for ATP; it reads GAGKTT. Residues 89–92, Phe-101, 106–109, 132–133, Lys-171, and 184–185 contribute to the adenosine 5'-phosphosulfate site; these read DNIR, REEN, IS, and GF. ATP is bound by residues Cys-207, Cys-212, 419–422, 521–525, and Ala-563; these read QLRN and GRDPA. Residues 234–624 form a sulfate adenylyltransferase region; it reads VKELYVPENK…AEYYKALEKA (391 aa).

It in the N-terminal section; belongs to the APS kinase family. In the C-terminal section; belongs to the sulfate adenylyltransferase family. In terms of assembly, homodimer.

The enzyme catalyses sulfate + ATP + H(+) = adenosine 5'-phosphosulfate + diphosphate. It catalyses the reaction adenosine 5'-phosphosulfate + ATP = 3'-phosphoadenylyl sulfate + ADP + H(+). Its pathway is sulfur metabolism; sulfate assimilation. Its function is as follows. Bifunctional enzyme with both ATP sulfurylase and APS kinase activity, which mediates two steps in the sulfate activation pathway. The first step is the transfer of a sulfate group to ATP to yield adenosine 5'-phosphosulfate (APS), and the second step is the transfer of a phosphate group from ATP to APS yielding 3'-phosphoadenylylsulfate (PAPS: activated sulfate donor used by sulfotransferase). In mammals, PAPS is the sole source of sulfate; APS appears to be only an intermediate in the sulfate-activation pathway. Required for normal biosynthesis of sulfated L-selectin ligands in endothelial cells. In Cavia porcellus (Guinea pig), this protein is Bifunctional 3'-phosphoadenosine 5'-phosphosulfate synthase 1 (PAPSS1).